The chain runs to 276 residues: Radial spoke head protein 9 homolog (276 aa).

Belongs to the flagellar radial spoke RSP9 family. In terms of assembly, component of the axonemal radial spoke 1 (RS1) and 2 (RS2) complexes, at least composed of spoke head proteins RSPH1, RSPH3, RSPH9 and the cilia-specific component RSPH4A or sperm-specific component RSPH6A, spoke stalk proteins RSPH14, DNAJB13, DYDC1, ROPN1L and NME5, and the RS1 complex-specific anchor protein IQUB. Interacts with IQUB. Interacts with RSPH3B. Interacts with RSPH4A. Interacts with RSPH6A. Interacts with CFAP61. Interacts with LRRC23. As to expression, expressed in the testis, trachea, lung, oviduct and ependymal cells (at protein level).

It is found in the cytoplasm. The protein resides in the cytoskeleton. It localises to the cilium axoneme. Its subcellular location is the flagellum axoneme. The protein localises to the cell projection. It is found in the kinocilium. Functionally, functions as part of axonemal radial spoke complexes that play an important part in the motility of sperm and cilia. Essential for both the radial spoke head assembly and the central pair microtubule stability in ependymal motile cilia. Required for motility of olfactory and neural cilia and for the structural integrity of ciliary axonemes in both 9+0 and 9+2 motile cilia. This chain is Radial spoke head protein 9 homolog (Rsph9), found in Mus musculus (Mouse).